Here is a 356-residue protein sequence, read N- to C-terminus: Peptide chain release factor 1 (356 aa).

Gln235 is modified (N5-methylglutamine).

This sequence belongs to the prokaryotic/mitochondrial release factor family. Methylated by PrmC. Methylation increases the termination efficiency of RF1.

The protein resides in the cytoplasm. Peptide chain release factor 1 directs the termination of translation in response to the peptide chain termination codons UAG and UAA. This is Peptide chain release factor 1 from Mycobacteroides abscessus (strain ATCC 19977 / DSM 44196 / CCUG 20993 / CIP 104536 / JCM 13569 / NCTC 13031 / TMC 1543 / L948) (Mycobacterium abscessus).